The following is a 398-amino-acid chain: Aspartate aminotransferase (398 aa).

3 residues coordinate L-aspartate: glycine 36, tryptophan 132, and asparagine 185. Lysine 248 carries the post-translational modification N6-(pyridoxal phosphate)lysine. An L-aspartate-binding site is contributed by arginine 376.

Belongs to the class-I pyridoxal-phosphate-dependent aminotransferase family. Homodimer. Pyridoxal 5'-phosphate is required as a cofactor.

Its subcellular location is the cytoplasm. It carries out the reaction L-aspartate + 2-oxoglutarate = oxaloacetate + L-glutamate. This is Aspartate aminotransferase (aspC) from Pseudomonas aeruginosa (strain ATCC 15692 / DSM 22644 / CIP 104116 / JCM 14847 / LMG 12228 / 1C / PRS 101 / PAO1).